Here is a 463-residue protein sequence, read N- to C-terminus: tRNA-2-methylthio-N(6)-dimethylallyladenosine synthase (463 aa).

Positions 5–125 (RKLHIKSYGC…LPQLLAKAEQ (121 aa)) constitute an MTTase N-terminal domain. [4Fe-4S] cluster contacts are provided by Cys14, Cys50, Cys88, Cys166, Cys170, and Cys173. One can recognise a Radical SAM core domain in the interval 152-384 (RARGISAFVT…QQLIDQQQSA (233 aa)). Residues 387–449 (KAAIGRTVEV…RYSLLGELAS (63 aa)) form the TRAM domain.

This sequence belongs to the methylthiotransferase family. MiaB subfamily. In terms of assembly, monomer. [4Fe-4S] cluster is required as a cofactor.

The protein localises to the cytoplasm. The enzyme catalyses N(6)-dimethylallyladenosine(37) in tRNA + (sulfur carrier)-SH + AH2 + 2 S-adenosyl-L-methionine = 2-methylsulfanyl-N(6)-dimethylallyladenosine(37) in tRNA + (sulfur carrier)-H + 5'-deoxyadenosine + L-methionine + A + S-adenosyl-L-homocysteine + 2 H(+). Functionally, catalyzes the methylthiolation of N6-(dimethylallyl)adenosine (i(6)A), leading to the formation of 2-methylthio-N6-(dimethylallyl)adenosine (ms(2)i(6)A) at position 37 in tRNAs that read codons beginning with uridine. The chain is tRNA-2-methylthio-N(6)-dimethylallyladenosine synthase from Rhodopseudomonas palustris (strain ATCC BAA-98 / CGA009).